A 601-amino-acid chain; its full sequence is Glutamine--fructose-6-phosphate aminotransferase [isomerizing] (601 aa).

Cysteine 2 acts as the Nucleophile; for GATase activity in catalysis. In terms of domain architecture, Glutamine amidotransferase type-2 spans cysteine 2–aspartate 218. SIS domains lie at isoleucine 284–arginine 423 and isoleucine 453–proline 591. Lysine 596 (for Fru-6P isomerization activity) is an active-site residue.

Homodimer.

The protein resides in the cytoplasm. It catalyses the reaction D-fructose 6-phosphate + L-glutamine = D-glucosamine 6-phosphate + L-glutamate. Catalyzes the first step in hexosamine metabolism, converting fructose-6P into glucosamine-6P using glutamine as a nitrogen source. The sequence is that of Glutamine--fructose-6-phosphate aminotransferase [isomerizing] from Staphylococcus aureus (strain COL).